We begin with the raw amino-acid sequence, 287 residues long: Protein REVEILLE 2 (287 aa).

Residues 31 to 85 form the HTH myb-type domain; sequence TITKQREKWTEAEHEKFVEALKLYGRAWRRIEEHVGTKTAVQIRSHAQKFFTKVA. Residues 58–81 constitute a DNA-binding region (H-T-H motif); the sequence is WRRIEEHVGTKTAVQIRSHAQKFF. The disordered stretch occupies residues 134–177; that stretch reads QDEDNRSPTSVLSAHGSDGLGSIGSNSPNSSSAELSSHTEESLS. The span at 156 to 169 shows a compositional bias: low complexity; it reads IGSNSPNSSSAELS.

The protein localises to the nucleus. Its function is as follows. Positive regulator for cold-responsive gene expression and cold tolerance. Part of a regulatory feedback loop that controls a subset of the circadian outputs and modulates the central oscillator. Negatively self-regulates its own expression. The sequence is that of Protein REVEILLE 2 (RVE2) from Arabidopsis thaliana (Mouse-ear cress).